We begin with the raw amino-acid sequence, 130 residues long: uncharacterized protein (130 aa).

Residues M1–A20 form the signal peptide.

This is an uncharacterized protein from Saccharomyces cerevisiae (strain ATCC 204508 / S288c) (Baker's yeast).